Consider the following 541-residue polypeptide: Methyl-accepting chemotaxis protein PcaY (541 aa).

Over 1–10 (MLANLKIRTG) the chain is Cytoplasmic. The helical transmembrane segment at 11 to 31 (MFWVLSLFSLTLLFSTASAWW) threads the bilayer. Over 32–189 (AAVGSDQQIT…ESDRRLARAQ (158 aa)) the chain is Periplasmic. A ligand-binding domain region spans residues 35–187 (GSDQQITELD…MLESDRRLAR (153 aa)). A helical membrane pass occupies residues 190–210 (LLSLCLLGMTVVLAVLCWAFI). The Cytoplasmic portion of the chain corresponds to 211–541 (AQRVLHPLRE…MTALVGRFKV (331 aa)). An HAMP domain is found at 212–264 (QRVLHPLREAGGHFRRIASGDLSVPVQGQGNNEIGQLFHELQRMQQSQRDTLG). The 237-residue stretch at 269-505 (CARQLDAAAS…EVDRNLLNIR (237 aa)) folds into the Methyl-accepting transducer domain. Residues 322–341 (TSQTTSESNQLAAQSRRQVS) are disordered.

Belongs to the methyl-accepting chemotaxis (MCP) protein family.

Its subcellular location is the cell inner membrane. Functionally, chemotactic-signal transducers respond to changes in the concentration of attractants and repellents in the environment, transduce a signal from the outside to the inside of the cell, and facilitate sensory adaptation through the variation of the level of methylation. PcaY is responsible for the detection of multiple aromatic and hydroaromatic compounds that are metabolized through the beta-ketoadipate catabolic pathway, including vanillin, vanillate, 4-hydroxybenzoate (4-HBA), benzoate and protocatechuate. It also senses several nonmetabolizable aromatic compounds. The sequence is that of Methyl-accepting chemotaxis protein PcaY from Pseudomonas putida (strain ATCC 700007 / DSM 6899 / JCM 31910 / BCRC 17059 / LMG 24140 / F1).